We begin with the raw amino-acid sequence, 192 residues long: Casparian strip membrane protein 1 (192 aa).

Residues 1-30 are Cytoplasmic-facing; it reads MSTTVDVPESSNVAKGKAIAVARPGGWKKG. The helical transmembrane segment at 31–51 threads the bilayer; it reads LAIMDFILRLGGIAASLGAAA. Residues 52–80 lie on the Extracellular side of the membrane; that stretch reads TMGTSDQTLPFFTQFFQFEASYDSFTTFQ. Residues 81–101 traverse the membrane as a helical segment; it reads FFVITMALVAGYLVLSLPFSV. Residues 102–113 lie on the Cytoplasmic side of the membrane; it reads VAIIRPHAPGPR. The chain crosses the membrane as a helical span at residues 114 to 134; the sequence is LFLIILDTVFLTLATASGASA. At 135–166 the chain is on the extracellular side; it reads AAIVYLAHNGNQDSNWLAICNQFGDFCAQTSG. A helical transmembrane segment spans residues 167-187; sequence AVVASFVAVVILVLLVIMSAL. At 188–192 the chain is on the cytoplasmic side; that stretch reads ALRRH.

This sequence belongs to the Casparian strip membrane proteins (CASP) family. In terms of assembly, homodimer and heterodimers.

The protein resides in the cell membrane. Its function is as follows. Regulates membrane-cell wall junctions and localized cell wall deposition. Required for establishment of the Casparian strip membrane domain (CSD) and the subsequent formation of Casparian strips, a cell wall modification of the root endodermis that determines an apoplastic barrier between the intraorganismal apoplasm and the extraorganismal apoplasm and prevents lateral diffusion. The chain is Casparian strip membrane protein 1 from Vigna unguiculata (Cowpea).